Reading from the N-terminus, the 244-residue chain is Cell division protein ZapD (244 aa).

The protein belongs to the ZapD family. As to quaternary structure, interacts with FtsZ.

It localises to the cytoplasm. In terms of biological role, cell division factor that enhances FtsZ-ring assembly. Directly interacts with FtsZ and promotes bundling of FtsZ protofilaments, with a reduction in FtsZ GTPase activity. The sequence is that of Cell division protein ZapD from Shewanella sp. (strain MR-7).